We begin with the raw amino-acid sequence, 427 residues long: MRRAGAACSAMDRLRLLLLLLLLLGVSFGGAKETCSTGMYTHSGECCKACNLGEGVAQPCGANQTVCEPCLDSVTFSDVVSATEPCKPCTECLGLQSMSAPCVEADDAVCRCSYGYYQDEETGRCEACSVCGVGSGLVFSCQDKQNTVCEECPEGTYSDEANHVDPCLPCTVCEDTERQLRECTPWADAECEEIPGRWITRSTPPEGSDVTTPSTQEPEAPPERDLIASTVADTVTTVMGSSQPVVTRGTADNLIPVYCSILAAVVVGLVAYIAFKRWNSCKQNKQGANSRPVNQTPPPEGEKLHSDSGISVDSQSLHDQQTHTQTASGQALKGDGNLYSSLPLTKREEVEKLLNGDTWRHLAGELGYQPEHIDSFTHEACPVRALLASWGAQDSATLDALLAALRRIQRADIVESLCSESTATSPV.

The signal sequence occupies residues 1-31 (MRRAGAACSAMDRLRLLLLLLLLLGVSFGGA). Topologically, residues 32-254 (KETCSTGMYT…VVTRGTADNL (223 aa)) are extracellular. TNFR-Cys repeat units lie at residues 34–67 (TCST…QTVC), 69–110 (PCLD…DAVC), 111–149 (RCSY…NTVC), and 151–191 (ECPE…DAEC). Cystine bridges form between Cys35–Cys46, Cys47–Cys60, Cys50–Cys67, Cys70–Cys86, Cys89–Cys102, Cys92–Cys110, Cys112–Cys125, Cys128–Cys141, Cys131–Cys149, Cys152–Cys167, Cys170–Cys183, and Cys173–Cys191. Asn63 carries N-linked (GlcNAc...) asparagine glycosylation. The segment at 197-223 (RWITRSTPPEGSDVTTPSTQEPEAPPE) is disordered. The span at 200 to 217 (TRSTPPEGSDVTTPSTQE) shows a compositional bias: polar residues. A helical membrane pass occupies residues 255-275 (IPVYCSILAAVVVGLVAYIAF). Residues 276 to 427 (KRWNSCKQNK…CSESTATSPV (152 aa)) are Cytoplasmic-facing. Composition is skewed to polar residues over residues 284 to 294 (NKQGANSRPVN) and 308 to 329 (SGIS…TASG). A disordered region spans residues 284-334 (NKQGANSRPVNQTPPPEGEKLHSDSGISVDSQSLHDQQTHTQTASGQALKG). Ser314 is subject to Phosphoserine. The interval 329 to 344 (GQALKGDGNLYSSLPL) is mediates interaction with KIDINS220. A Death domain is found at 356 to 421 (GDTWRHLAGE…DIVESLCSES (66 aa)).

In terms of assembly, homodimer; disulfide-linked. Heterodimer with SORCS2. The extracellular domains of the heterodimer bind NGF. The cytoplasmic region of the heterodimer binds TRIO. NGF binding mediates dissociation of TRIO from the receptor complex. Interacts with TRAF2, TRAF4, TRAF6, PTPN13 and RANBP9. Interacts through TRAF6 with SQSTM1 which bridges NGFR to NTRK1. Interacts with BEX1. Interacts with BEX3. Interacts with KIDINS220 and NTRK1. Can form a ternary complex with NTRK1 and KIDINS220 and this complex is affected by the expression levels of KIDINS220. An increase in KIDINS220 expression leads to a decreased association of NGFR and NTRK1. Interacts (via death domain) with RAB31. Interacts with NTRK2; may regulate the ligand specificity of the NTRK2 receptor. Interacts with LINGO1. Interacts with NRADD. Interacts with MAGED1; the interaction antagonizes the association NGFR:NTRK1. Interacts with RTN4R. Interacts (via death domain) with ARHGDIA and RIPK2. Interacts with BFAR. As to quaternary structure, (Microbial infection) Binds to rabies virus glycoprotein Gs. N-glycosylated. O-glycosylated. In terms of processing, phosphorylated on serine residues. In terms of tissue distribution, detected in Schwann cells. Detected in embryonic brain, in hippocampus neurons (at protein level). Detected in brain and spinal cord.

It localises to the cell membrane. It is found in the cytoplasm. The protein localises to the perikaryon. Its subcellular location is the cell projection. The protein resides in the growth cone. It localises to the dendritic spine. In terms of biological role, low affinity neurotrophin receptor which can bind to mature NGF, BDNF, NTF3, and NTF4. Forms a heterodimeric receptor with SORCS2 that binds the precursor forms of NGF (proNGF), BDNF (proBDNF) and NTF3 (proNT3) with high affinity, and has much lower affinity for mature NGF and BDNF. Plays an important role in differentiation and survival of specific neuronal populations during development. Can mediate cell survival as well as cell death of neural cells. The heterodimeric receptor formed with SORCS2 plays a role in proBDNF-dependent synaptic plasticity, in hippocampal long term depression (LTD) and long term potentiation (LTP). Plays a role in the inactivation of RHOA. Plays a role in the regulation of the translocation of GLUT4 to the cell surface in adipocytes and skeletal muscle cells in response to insulin, probably by regulating RAB31 activity, and thereby contributes to the regulation of insulin-dependent glucose uptake. Necessary for the circadian oscillation of the clock genes BMAL1, PER1, PER2 and NR1D1 in the suprachiasmatic nucleus (SCN) of the brain and in liver and of the genes involved in glucose and lipid metabolism in the liver. (Microbial infection) Cell surface receptor for rabies virus glycoprotein Gs. Functionally, does not bind NGF, BDNF, NTF3, and NTF4. In Mus musculus (Mouse), this protein is Tumor necrosis factor receptor superfamily member 16 (Ngfr).